Consider the following 306-residue polypeptide: Dermonecrotic toxin LiSicTox-alphaIA2ai (306 aa).

Residues 1-18 form the signal peptide; it reads MLPYIALILVCWSVLSQA. Positions 19–26 are excised as a propeptide; sequence AQTDVEGR. Residue His-38 is part of the active site. The Mg(2+) site is built by Glu-58 and Asp-60. His-74 acts as the Nucleophile in catalysis. Intrachain disulfides connect Cys-78–Cys-84 and Cys-80–Cys-223. Asp-118 provides a ligand contact to Mg(2+). Asn-283 carries an N-linked (GlcNAc...) asparagine glycan.

The protein belongs to the arthropod phospholipase D family. Class II subfamily. Class IIa sub-subfamily. Requires Mg(2+) as cofactor. In terms of tissue distribution, expressed by the venom gland.

Its subcellular location is the secreted. It carries out the reaction an N-(acyl)-sphingosylphosphocholine = an N-(acyl)-sphingosyl-1,3-cyclic phosphate + choline. The catalysed reaction is an N-(acyl)-sphingosylphosphoethanolamine = an N-(acyl)-sphingosyl-1,3-cyclic phosphate + ethanolamine. The enzyme catalyses a 1-acyl-sn-glycero-3-phosphocholine = a 1-acyl-sn-glycero-2,3-cyclic phosphate + choline. It catalyses the reaction a 1-acyl-sn-glycero-3-phosphoethanolamine = a 1-acyl-sn-glycero-2,3-cyclic phosphate + ethanolamine. Dermonecrotic toxins cleave the phosphodiester linkage between the phosphate and headgroup of certain phospholipids (sphingolipid and lysolipid substrates), forming an alcohol (often choline) and a cyclic phosphate. This toxin acts on sphingomyelin (SM). It may also act on ceramide phosphoethanolamine (CPE), lysophosphatidylcholine (LPC) and lysophosphatidylethanolamine (LPE), but not on lysophosphatidylserine (LPS), and lysophosphatidylglycerol (LPG). It acts by transphosphatidylation, releasing exclusively cyclic phosphate products as second products. It induces complement-dependent hemolysis, dermonecrosis, vascular permeability and platelet aggregation. The protein is Dermonecrotic toxin LiSicTox-alphaIA2ai of Loxosceles intermedia (Brown spider).